Here is a 226-residue protein sequence, read N- to C-terminus: Large ribosomal subunit protein uL1 (226 aa).

It belongs to the universal ribosomal protein uL1 family. Part of the 50S ribosomal subunit.

In terms of biological role, binds directly to 23S rRNA. The L1 stalk is quite mobile in the ribosome, and is involved in E site tRNA release. Its function is as follows. Protein L1 is also a translational repressor protein, it controls the translation of the L11 operon by binding to its mRNA. This Mycoplasmoides gallisepticum (strain R(low / passage 15 / clone 2)) (Mycoplasma gallisepticum) protein is Large ribosomal subunit protein uL1.